We begin with the raw amino-acid sequence, 530 residues long: Autoinducer-2 kinase (530 aa).

Belongs to the FGGY kinase family.

The protein resides in the cytoplasm. It catalyses the reaction (S)-4,5-dihydroxypentane-2,3-dione + ATP = (2S)-2-hydroxy-3,4-dioxopentyl phosphate + ADP + H(+). Catalyzes the phosphorylation of autoinducer-2 (AI-2) to phospho-AI-2, which subsequently inactivates the transcriptional regulator LsrR and leads to the transcription of the lsr operon. Phosphorylates the ring-open form of (S)-4,5-dihydroxypentane-2,3-dione (DPD), which is the precursor to all AI-2 signaling molecules, at the C5 position. The protein is Autoinducer-2 kinase of Escherichia coli (strain K12 / DH10B).